The chain runs to 2451 residues: Reducing polyketide synthase 8 (2451 aa).

The region spanning 12–434 (NEPIAIVGSS…GTNAHAILEA (423 aa)) is the Ketosynthase family 3 (KS3) domain. Residues C174, H313, and H354 each act as for beta-ketoacyl synthase activity in the active site. The Malonyl-CoA:ACP transacylase (MAT) domain maps to 538–846 (VFTGQGAQWA…GPATETINNM (309 aa)). Positions 940–1085 (HQLLGSASTF…GFLRIELGAP (146 aa)) are N-terminal hotdog fold. The PKS/mFAS DH domain occupies 940 to 1254 (HQLLGSASTF…LLNLPGSLRS (315 aa)). H974 serves as the catalytic Proton acceptor; for dehydratase activity. The C-terminal hotdog fold stretch occupies residues 1100 to 1254 (LIPLDVEELY…LLNLPGSLRS (155 aa)). D1160 serves as the catalytic Proton donor; for dehydratase activity. Residues 1294–1590 (LVLFYCQKVL…QHFCSVMLSQ (297 aa)) are methyltransfrase (MT) domain. The Ketoreductase (KR) domain occupies 2088–2266 (TYLLLGLAGD…PGCVVHIGGV (179 aa)). The Carrier domain occupies 2366–2451 (DACLDLLLGG…LAIWRKQVKA (86 aa)). S2404 is modified (O-(pantetheine 4'-phosphoryl)serine).

Pantetheine 4'-phosphate is required as a cofactor.

It functions in the pathway secondary metabolite biosynthesis. In terms of biological role, reducing polyketide synthase; part of the gene cluster that mediates the biosynthesis of fusamarins, isocoumarin derivatives that show moderate cytotoxicity with IC(50) values between 1 and 50 uM. The polyketide synthase FMN1 probably synthesizes two different polyketides, a tetra- and a pentaketide, containinga varying number of double bonds depending on the selective actions of the trans-enoyl reductase FMN2. Chain fusion will presumably be mediated by the KS domain before finally offloading is catalyzed by the alpha/beta hydrolase fold enzyme FMN3. The protein is Reducing polyketide synthase 8 of Fusarium mangiferae (Mango malformation disease fungus).